Reading from the N-terminus, the 384-residue chain is PqqA peptide cyclase (384 aa).

The Radical SAM core domain maps to 14–226 (IPAPVGLLAE…IRIVEAARER (213 aa)). Cys28, Cys32, and Cys35 together coordinate [4Fe-4S] cluster.

This sequence belongs to the radical SAM superfamily. PqqE family. In terms of assembly, interacts with PqqD. The interaction is necessary for activity of PqqE. [4Fe-4S] cluster is required as a cofactor.

The catalysed reaction is [PQQ precursor protein] + S-adenosyl-L-methionine = E-Y cross-linked-[PQQ precursor protein] + 5'-deoxyadenosine + L-methionine + H(+). It participates in cofactor biosynthesis; pyrroloquinoline quinone biosynthesis. Catalyzes the cross-linking of a glutamate residue and a tyrosine residue in the PqqA protein as part of the biosynthesis of pyrroloquinoline quinone (PQQ). The chain is PqqA peptide cyclase from Methylorubrum populi (strain ATCC BAA-705 / NCIMB 13946 / BJ001) (Methylobacterium populi).